The chain runs to 290 residues: Xyloglucan endotransglucosylase/hydrolase protein 3 (290 aa).

Positions 1 to 21 (MDYMRIFSVFVVTLWIIRVDA) are cleaved as a signal peptide. The GH16 domain occupies 22–220 (RVFGGRGIEK…WSYSPFIAHF (199 aa)). The active-site Nucleophile is glutamate 109. The Proton donor role is filled by glutamate 113. Residues glutamate 113, 126-128 (QTN), 136-138 (NRE), 199-200 (DW), and glycine 204 each bind xyloglucan. Residue asparagine 210 is glycosylated (N-linked (GlcNAc...) asparagine). Intrachain disulfides connect cysteine 228–cysteine 240 and cysteine 276–cysteine 289.

It belongs to the glycosyl hydrolase 16 family. XTH group 1 subfamily. Contains at least one intrachain disulfide bond essential for its enzymatic activity. Predominantly expressed in flower buds.

Its subcellular location is the secreted. The protein resides in the cell wall. It localises to the extracellular space. The protein localises to the apoplast. The catalysed reaction is breaks a beta-(1-&gt;4) bond in the backbone of a xyloglucan and transfers the xyloglucanyl segment on to O-4 of the non-reducing terminal glucose residue of an acceptor, which can be a xyloglucan or an oligosaccharide of xyloglucan.. Its function is as follows. Catalyzes xyloglucan endohydrolysis (XEH) and/or endotransglycosylation (XET). Cleaves and religates xyloglucan polymers, an essential constituent of the primary cell wall, and thereby participates in cell wall construction of growing tissues. The chain is Xyloglucan endotransglucosylase/hydrolase protein 3 (XTH3) from Arabidopsis thaliana (Mouse-ear cress).